The chain runs to 321 residues: Aspartate carbamoyltransferase catalytic subunit (321 aa).

Carbamoyl phosphate-binding residues include arginine 65 and threonine 66. Lysine 93 provides a ligand contact to L-aspartate. Positions 115, 143, and 146 each coordinate carbamoyl phosphate. L-aspartate-binding residues include arginine 176 and arginine 230. The carbamoyl phosphate site is built by glycine 271 and proline 272.

Belongs to the aspartate/ornithine carbamoyltransferase superfamily. ATCase family. As to quaternary structure, heterododecamer (2C3:3R2) of six catalytic PyrB chains organized as two trimers (C3), and six regulatory PyrI chains organized as three dimers (R2).

The enzyme catalyses carbamoyl phosphate + L-aspartate = N-carbamoyl-L-aspartate + phosphate + H(+). Its pathway is pyrimidine metabolism; UMP biosynthesis via de novo pathway; (S)-dihydroorotate from bicarbonate: step 2/3. Its function is as follows. Catalyzes the condensation of carbamoyl phosphate and aspartate to form carbamoyl aspartate and inorganic phosphate, the committed step in the de novo pyrimidine nucleotide biosynthesis pathway. This chain is Aspartate carbamoyltransferase catalytic subunit, found in Bartonella bacilliformis (strain ATCC 35685 / KC583 / Herrer 020/F12,63).